A 751-amino-acid polypeptide reads, in one-letter code: Polyadenylate-binding protein, cytoplasmic and nuclear (751 aa).

Polar residues-rich tracts occupy residues 1–26 (MSAEVSTTPAADNTVNGTPEATNPAA) and 36–50 (ESASPSATPSANQPH). Residues 1-50 (MSAEVSTTPAADNTVNGTPEATNPAATSAPEVTAVESASPSATPSANQPH) form a disordered region. RRM domains lie at 52 to 130 (ASLY…WSQR), 140 to 217 (GNVF…HHIS), 233 to 310 (TNVY…RAQK), and 336 to 458 (VNLY…LAQR). Disordered stretches follow at residues 371–413 (TVTA…KKTE) and 601–643 (GQGM…REEV). A compositionally biased stretch (basic and acidic residues) spans 379–413 (ESEKEKESNKENEKEGEEKTEEKPKESEEEAKKTE). The segment covering 603-629 (GMRGPGYGQGRGGAPVQGGPRPQGGRG) has biased composition (gly residues). In terms of domain architecture, PABC spans 646-723 (TGGLTAQTLN…ALSVYDEYMK (78 aa)). Positions 725–751 (KGEGEAPAEPAKPKEDAAETATEENKS) are disordered. Residues 735-751 (AKPKEDAAETATEENKS) are compositionally biased toward basic and acidic residues.

The protein belongs to the polyadenylate-binding protein type-1 family.

The protein resides in the cytoplasm. It is found in the nucleus. Binds the poly(A) tail of mRNA. Appears to be an important mediator of the multiple roles of the poly(A) tail in mRNA biogenesis, stability and translation. In the nucleus, involved in both mRNA cleavage and polyadenylation. Is also required for efficient mRNA export to the cytoplasm. Acts in concert with a poly(A)-specific nuclease (PAN) to affect poly(A) tail shortening, which may occur concomitantly with either nucleocytoplasmic mRNA transport or translational initiation. In the cytoplasm, stimulates translation initiation and regulates mRNA decay through translation termination-coupled poly(A) shortening, probably mediated by PAN. The sequence is that of Polyadenylate-binding protein, cytoplasmic and nuclear (pab1) from Neosartorya fischeri (strain ATCC 1020 / DSM 3700 / CBS 544.65 / FGSC A1164 / JCM 1740 / NRRL 181 / WB 181) (Aspergillus fischerianus).